The following is a 476-amino-acid chain: Serine--tRNA ligase (476 aa).

279–281 (TAE) contributes to the L-serine binding site. 310–312 (RAE) lines the ATP pocket. Residue Glu333 coordinates L-serine. 400 to 403 (EISS) is an ATP binding site. Ser435 contacts L-serine.

It belongs to the class-II aminoacyl-tRNA synthetase family. Type-1 seryl-tRNA synthetase subfamily. In terms of assembly, homodimer. The tRNA molecule binds across the dimer.

The protein resides in the cytoplasm. The catalysed reaction is tRNA(Ser) + L-serine + ATP = L-seryl-tRNA(Ser) + AMP + diphosphate + H(+). The enzyme catalyses tRNA(Sec) + L-serine + ATP = L-seryl-tRNA(Sec) + AMP + diphosphate + H(+). The protein operates within aminoacyl-tRNA biosynthesis; selenocysteinyl-tRNA(Sec) biosynthesis; L-seryl-tRNA(Sec) from L-serine and tRNA(Sec): step 1/1. Its function is as follows. Catalyzes the attachment of serine to tRNA(Ser). Is also able to aminoacylate tRNA(Sec) with serine, to form the misacylated tRNA L-seryl-tRNA(Sec), which will be further converted into selenocysteinyl-tRNA(Sec). The chain is Serine--tRNA ligase from Rhodopseudomonas palustris (strain BisA53).